A 373-amino-acid chain; its full sequence is SH3 domain-binding protein 5-like (373 aa).

The segment at 1–53 (MEGKEGPSCEVRLPTPGAEREGPIHPELGAFGETASNTIKLSESSNDGKKEEI) is disordered. A compositionally biased stretch (polar residues) spans 34–45 (TASNTIKLSESS). 2 coiled-coil regions span residues 55–98 (EELD…ESAR) and 170–272 (WQEM…SEEI). 2 disordered regions span residues 276–305 (RTQS…TGPP) and 344–373 (TGAV…SVSL). A compositionally biased stretch (basic and acidic residues) spans 344 to 358 (TGAVECGGSRERGGD).

Belongs to the SH3BP5 family.

In terms of biological role, functions as a guanine nucleotide exchange factor (GEF) for rab11a. In Xenopus tropicalis (Western clawed frog), this protein is SH3 domain-binding protein 5-like (sh3bp5l).